Here is a 3912-residue protein sequence, read N- to C-terminus: Chondramide synthase cmdD (3912 aa).

The Carrier 1 domain occupies 1411 to 1485; it reads APRNAREETL…ALAEVASASK (75 aa). Position 1446 is an O-(pantetheine 4'-phosphoryl)serine (Ser1446). A compositionally biased stretch (acidic residues) spans 1995–2029; the sequence is ADEDDEEDDELDEEFDAEVDEEDEDEEEEEDDDGE. The interval 1995–2030 is disordered; it reads ADEDDEEDDELDEEFDAEVDEEDEDEEEEEDDDGEN. In terms of domain architecture, Carrier 2 spans 2989 to 3064; that stretch reads APRTATEETL…VLARVIDEAL (76 aa). Position 3024 is an O-(pantetheine 4'-phosphoryl)serine (Ser3024).

This sequence belongs to the ATP-dependent AMP-binding enzyme family. Pantetheine 4'-phosphate serves as cofactor.

In terms of biological role, involved in the synthesis of chondramides. Activates R-beta-tyrosine and probably phenylalanine. The polypeptide is Chondramide synthase cmdD (Chondromyces crocatus).